Consider the following 230-residue polypeptide: Enolase-phosphatase E1 (230 aa).

It belongs to the HAD-like hydrolase superfamily. MasA/MtnC family. As to quaternary structure, monomer. Mg(2+) serves as cofactor.

The enzyme catalyses 5-methylsulfanyl-2,3-dioxopentyl phosphate + H2O = 1,2-dihydroxy-5-(methylsulfanyl)pent-1-en-3-one + phosphate. The protein operates within amino-acid biosynthesis; L-methionine biosynthesis via salvage pathway; L-methionine from S-methyl-5-thio-alpha-D-ribose 1-phosphate: step 3/6. It participates in amino-acid biosynthesis; L-methionine biosynthesis via salvage pathway; L-methionine from S-methyl-5-thio-alpha-D-ribose 1-phosphate: step 4/6. Functionally, bifunctional enzyme that catalyzes the enolization of 2,3-diketo-5-methylthiopentyl-1-phosphate (DK-MTP-1-P) into the intermediate 2-hydroxy-3-keto-5-methylthiopentenyl-1-phosphate (HK-MTPenyl-1-P), which is then dephosphorylated to form the acireductone 1,2-dihydroxy-3-keto-5-methylthiopentene (DHK-MTPene). This is Enolase-phosphatase E1 from Bradyrhizobium sp. (strain BTAi1 / ATCC BAA-1182).